Here is a 247-residue protein sequence, read N- to C-terminus: tRNA pseudouridine synthase A (247 aa).

Aspartate 52 functions as the Nucleophile in the catalytic mechanism. Tyrosine 113 is a substrate binding site.

It belongs to the tRNA pseudouridine synthase TruA family. In terms of assembly, homodimer.

It catalyses the reaction uridine(38/39/40) in tRNA = pseudouridine(38/39/40) in tRNA. Its function is as follows. Formation of pseudouridine at positions 38, 39 and 40 in the anticodon stem and loop of transfer RNAs. The sequence is that of tRNA pseudouridine synthase A from Bartonella henselae (strain ATCC 49882 / DSM 28221 / CCUG 30454 / Houston 1) (Rochalimaea henselae).